The sequence spans 373 residues: Probable tRNA sulfurtransferase (373 aa).

One can recognise a THUMP domain in the interval 54–158; that stretch reads NKNIEELSKV…NDVAYFYHKI (105 aa). ATP is bound by residues 176–177, 201–202, lysine 256, glycine 278, and glutamine 287; these read LF and NF.

The protein belongs to the ThiI family.

It localises to the cytoplasm. The catalysed reaction is [ThiI sulfur-carrier protein]-S-sulfanyl-L-cysteine + a uridine in tRNA + 2 reduced [2Fe-2S]-[ferredoxin] + ATP + H(+) = [ThiI sulfur-carrier protein]-L-cysteine + a 4-thiouridine in tRNA + 2 oxidized [2Fe-2S]-[ferredoxin] + AMP + diphosphate. It catalyses the reaction [ThiS sulfur-carrier protein]-C-terminal Gly-Gly-AMP + S-sulfanyl-L-cysteinyl-[cysteine desulfurase] + AH2 = [ThiS sulfur-carrier protein]-C-terminal-Gly-aminoethanethioate + L-cysteinyl-[cysteine desulfurase] + A + AMP + 2 H(+). It functions in the pathway cofactor biosynthesis; thiamine diphosphate biosynthesis. Catalyzes the ATP-dependent transfer of a sulfur to tRNA to produce 4-thiouridine in position 8 of tRNAs, which functions as a near-UV photosensor. Also catalyzes the transfer of sulfur to the sulfur carrier protein ThiS, forming ThiS-thiocarboxylate. This is a step in the synthesis of thiazole, in the thiamine biosynthesis pathway. The sulfur is donated as persulfide by IscS. In Saccharolobus islandicus (strain M.16.4 / Kamchatka #3) (Sulfolobus islandicus), this protein is Probable tRNA sulfurtransferase.